A 193-amino-acid polypeptide reads, in one-letter code: Non-specific lipid transfer protein GPI-anchored 10 (193 aa).

Residues 1–24 (MASSTLLITLLISLSAFFLRMVLA) form the signal peptide. Disulfide bonds link cysteine 30-cysteine 71, cysteine 40-cysteine 55, cysteine 56-cysteine 98, and cysteine 69-cysteine 107. Asparagine 76, asparagine 87, and asparagine 103 each carry an N-linked (GlcNAc...) asparagine glycan. A disordered region spans residues 109 to 140 (SSFPGEAPSDSSSVAPPPSSSTGSQISQGAKN). The span at 116–132 (PSDSSSVAPPPSSSTGS) shows a compositional bias: low complexity. Asparagine 140 carries N-linked (GlcNAc...) asparagine glycosylation. Residue serine 168 is the site of GPI-anchor amidated serine attachment. A propeptide spans 169 to 193 (SGSKSEIQLTIFALAAILPAALLLI) (removed in mature form).

It belongs to the plant LTP family.

The protein localises to the cell membrane. Its function is as follows. Probable lipid transfer protein. This Arabidopsis thaliana (Mouse-ear cress) protein is Non-specific lipid transfer protein GPI-anchored 10.